A 247-amino-acid chain; its full sequence is MNPLLILAFVGAAVAVPFDDDDKIVGGYTCEENSVPYQVSLNSGSHFCGGSLISEQWVVSAGHCYKPHIQVRLGEHNIEVLEGNEQFINAAKIIRHPKYNRIILNNDIMLIKLSTPAVINAHVSTISLPTAPPAAGTECLISGWGNTLSSGADYPDELQCLDAPVLTQAKCKASYPLKITSNMFCVGFLEGGKDSCQGDSGGPVVCNGQLQGIVSWGYGCAQKRRPGVYTKVYNYVDWIKDTIAANS.

An N-terminal signal peptide occupies residues 1 to 15; it reads MNPLLILAFVGAAVA. Residues 24-244 form the Peptidase S1 domain; it reads IVGGYTCEEN…YVDWIKDTIA (221 aa). Cys48 and Cys64 form a disulfide bridge. The Charge relay system role is filled by His63. 4 residues coordinate Ca(2+): Glu75, Asn77, Val80, and Glu85. The Charge relay system role is filled by Asp107. 3 cysteine pairs are disulfide-bonded: Cys139-Cys206, Cys171-Cys185, and Cys196-Cys220. Ser200 functions as the Charge relay system in the catalytic mechanism.

This sequence belongs to the peptidase S1 family. Tryptase subfamily. As to expression, overexpressed in metastasing in non small cell lung tumors, leading to an enhanced cell migration.

Its subcellular location is the secreted. It catalyses the reaction Preferential cleavage: Arg-|-Xaa, Lys-|-Xaa.. In terms of biological role, may regulate cell migration. This Homo sapiens (Human) protein is Putative trypsin-6 (PRSS3P2).